Here is a 169-residue protein sequence, read N- to C-terminus: Cell division inhibitor SulA (169 aa).

A compositionally biased stretch (polar residues) spans 1–16 (MFTSAHANRSPLTSAS). The interval 1-20 (MFTSAHANRSPLTSASVRRP) is disordered. Residues 106 to 112 (ALRTGNY) are ftsZ binding. The segment at 162 to 169 (KIHSNLYH) is lon protease binding.

It belongs to the SulA family. As to quaternary structure, interacts with FtsZ. Is rapidly cleaved and degraded by the Lon protease once DNA damage is repaired.

Component of the SOS system and an inhibitor of cell division. Accumulation of SulA causes rapid cessation of cell division and the appearance of long, non-septate filaments. In the presence of GTP, binds a polymerization-competent form of FtsZ in a 1:1 ratio, thus inhibiting FtsZ polymerization and therefore preventing it from participating in the assembly of the Z ring. This mechanism prevents the premature segregation of damaged DNA to daughter cells during cell division. The sequence is that of Cell division inhibitor SulA from Klebsiella aerogenes (Enterobacter aerogenes).